The chain runs to 4563 residues: Apolipoprotein B-100 (4563 aa).

The signal sequence occupies residues 1–27 (MDPPRPALLALLALPALLLLLLAGARA). Positions 32-126 (LENVSLVCPK…KNSEEFAAAM (95 aa)) are heparin-binding. A glycan (N-linked (GlcNAc...) asparagine) is linked at asparagine 34. Intrachain disulfides connect cysteine 39-cysteine 88 and cysteine 78-cysteine 97. A Vitellogenin domain is found at 46-672 (FKHLRKYTYN…PNNYLPKESM (627 aa)). N-linked (GlcNAc...) asparagine glycosylation is present at asparagine 185. 4 cysteine pairs are disulfide-bonded: cysteine 186–cysteine 212, cysteine 245–cysteine 261, cysteine 385–cysteine 390, and cysteine 478–cysteine 513. The segment at 232 to 306 (TRPLSTLISS…RFFGEGTKKM (75 aa)) is heparin-binding. The heparin-binding stretch occupies residues 902-959 (NTNFFHESGLEAHVALKAGKLKFIIPSPKRPVKLLSGGNTLHLVSTTKTEVIPPLIEN). Cysteine 966 and cysteine 976 are disulfide-bonded. Asparagine 983 is a glycosylation site (N-linked (GlcNAc...) asparagine). Cysteine 1112 carries S-palmitoyl cysteine lipidation. N-linked (GlcNAc...) asparagine glycans are attached at residues asparagine 1368, asparagine 1377, and asparagine 1523. Lysine 2004 is subject to N6-acetyllysine. The interval 2043-2178 (RDAVEKPQEF…EKLSQLQTYM (136 aa)) is heparin-binding. Residues asparagine 2239, asparagine 2560, asparagine 2779, asparagine 2982, and asparagine 3101 are each glycosylated (N-linked (GlcNAc...) asparagine). The interval 3161 to 3236 (FLKTTKQSFD…KIKFDKYKAE (76 aa)) is heparin-binding. The tract at residues 3174–3184 (KAQYKKNKHRH) is basic (possible receptor binding region). Cysteines 3194 and 3324 form a disulfide. N-linked (GlcNAc...) asparagine glycosylation occurs at asparagine 3224. At serine 3279 the chain carries Phosphoserine. N-linked (GlcNAc...) asparagine glycans are attached at residues asparagine 3336 and asparagine 3358. The segment at 3373 to 3393 (VIDALQYKLEGTTRLTRKRGL) is LDL receptor binding. The interval 3383-3516 (GTTRLTRKRG…REYSGTIASE (134 aa)) is heparin-binding. The basic (possible receptor binding region) stretch occupies residues 3386–3394 (RLTRKRGLK). Residues asparagine 3411, asparagine 3465, and asparagine 3895 are each glycosylated (N-linked (GlcNAc...) asparagine). At serine 4048 the chain carries Phosphoserine; by FAM20C. Position 4052 is a phosphothreonine (threonine 4052). 2 N-linked (GlcNAc...) asparagine glycosylation sites follow: asparagine 4237 and asparagine 4431.

As to quaternary structure, interacts with PCSK9. Interacts with MTTP. Interacts with AUP1. Interacts with CIDEB. In terms of processing, palmitoylated; structural requirement for proper assembly of the hydrophobic core of the lipoprotein particle.

Its subcellular location is the cytoplasm. The protein resides in the secreted. It is found in the lipid droplet. Its function is as follows. Apolipoprotein B is a major protein constituent of chylomicrons (apo B-48), LDL (apo B-100) and VLDL (apo B-100). Apo B-100 functions as a recognition signal for the cellular binding and internalization of LDL particles by the apoB/E receptor. This chain is Apolipoprotein B-100 (APOB), found in Homo sapiens (Human).